Consider the following 294-residue polypeptide: N-acetylmuramic acid 6-phosphate etherase (294 aa).

The SIS domain maps to 54-217 (VTKSFEEEGR…STASMIGVGK (164 aa)). Glu82 functions as the Proton donor in the catalytic mechanism. Residue Glu113 is part of the active site.

This sequence belongs to the GCKR-like family. MurNAc-6-P etherase subfamily. As to quaternary structure, homodimer.

It catalyses the reaction N-acetyl-D-muramate 6-phosphate + H2O = N-acetyl-D-glucosamine 6-phosphate + (R)-lactate. Its pathway is amino-sugar metabolism; N-acetylmuramate degradation. Its function is as follows. Specifically catalyzes the cleavage of the D-lactyl ether substituent of MurNAc 6-phosphate, producing GlcNAc 6-phosphate and D-lactate. This is N-acetylmuramic acid 6-phosphate etherase from Bacillus mycoides (strain KBAB4) (Bacillus weihenstephanensis).